The sequence spans 200 residues: Large ribosomal subunit protein uL4 (200 aa).

The interval 43 to 67 (RAQKTRAEVSGSGKKPWRQKGTGRA) is disordered.

This sequence belongs to the universal ribosomal protein uL4 family. In terms of assembly, part of the 50S ribosomal subunit.

Functionally, one of the primary rRNA binding proteins, this protein initially binds near the 5'-end of the 23S rRNA. It is important during the early stages of 50S assembly. It makes multiple contacts with different domains of the 23S rRNA in the assembled 50S subunit and ribosome. Its function is as follows. Forms part of the polypeptide exit tunnel. The polypeptide is Large ribosomal subunit protein uL4 (Haemophilus influenzae (strain PittEE)).